We begin with the raw amino-acid sequence, 88 residues long: Small cysteine-rich outer membrane protein OmcA (88 aa).

A signal peptide spans 1-18 (MKKTALLAALCSVVSLSS). Cysteine 19 is lipidated: N-palmitoyl cysteine. A lipid anchor (S-diacylglycerol cysteine) is attached at cysteine 19. The tract at residues 67-88 (THQDAEHGPQAREIPVDGKCRQ) is disordered.

Part of a disulfide cross-linked outer membrane complex (COMC) composed of the major outer membrane porin (MOMP), the small cysteine-rich protein (OmcA) and the large cysteine-rich periplasmic protein (OmcB).

It localises to the cell outer membrane. In elementary bodies (EBs, the infectious stage, which is able to survive outside the host cell) provides the structural integrity of the outer envelope through disulfide cross-links with the large cysteine-rich periplasmic protein and the major outer membrane porin. It has been described in publications as the Sarkosyl-insoluble COMC (Chlamydia outer membrane complex), and serves as the functional equivalent of peptidoglycan. This chain is Small cysteine-rich outer membrane protein OmcA (omcA), found in Chlamydia trachomatis serovar L2 (strain ATCC VR-902B / DSM 19102 / 434/Bu).